Reading from the N-terminus, the 485-residue chain is Velvet complex subunit B (485 aa).

Residues 33–459 (GRKHYSLEVV…GNQGQKLPLA (427 aa)) enclose the Velvet domain. A disordered region spans residues 107-353 (VLHPSSVDRH…PPPPRHTYTR (247 aa)). Composition is skewed to polar residues over residues 134-155 (APQSRAPANQTPSGGSTPTLSQ), 234-243 (RSPSSSTSDH), 267-304 (SISSYSNSQVDPSVRNHSNSEGIENPGWSSSEATSPHS), and 326-341 (THSQMAPGTCSSQHVS).

This sequence belongs to the velvet family. VelB subfamily. Component of the heterotrimeric velvet complex composed of laeA, veA and velB; VeA acting as a bridging protein between laeA and velB. Forms a heterodimeric complex with vosA; the formation of the velB-vosA complex is light-dependent.

Its subcellular location is the nucleus. The protein localises to the cytoplasm. Component of the velvet transcription factor complex that controls sexual/asexual developmental ratio in response to light, promoting sexual development in the darkness while stimulating asexual sporulation under illumination. The velvet complex acts as a global regulator for secondary metabolite gene expression. Component of the velB-VosA heterodimeric complex that plays a dual role in activating genes associated with spore maturation and repressing certain development-associated genes. The velB-VosA complex binds DNA through the DNA-binding domain of vosA that recognizes an 11-nucleotide consensus sequence 5'-CTGGCCGCGGC-3' consisting of two motifs in the promoters of key developmental regulatory genes. This chain is Velvet complex subunit B, found in Laccaria bicolor (strain S238N-H82 / ATCC MYA-4686) (Bicoloured deceiver).